Reading from the N-terminus, the 317-residue chain is COP9 signalosome complex subunit 6a (317 aa).

Residues 30-164 (TQLNPPASIC…VTIYESELHV (135 aa)) enclose the MPN domain.

This sequence belongs to the peptidase M67A family. CSN6 subfamily. Component of the CSN complex, probably composed of CSN1, CSN2, CSN3, CSN4, CSN5 (CSN5A or CSN5B), CSN6 (CSN6A or CSN6B), CSN7 and CSN8. Interacts with itself. In the complex, it probably interacts directly with CSN4 and CSN5A or CSN5B. Interacts with CSN7 (via C-terminal tail). Binds to the translation initiation factors TIF3E1.

The protein localises to the cytoplasm. Its subcellular location is the nucleus. Functionally, component of the COP9 signalosome complex (CSN), a complex involved in various cellular and developmental processes such as photomorphogenesis and auxin and jasmonate responses. The CSN complex is an essential regulator of the ubiquitin (Ubl) conjugation pathway by mediating the deneddylation of the cullin subunits of SCF-type E3 ligase complexes, leading to decrease the Ubl ligase activity of SCF. It is involved in repression of photomorphogenesis in darkness by regulating the activity of COP1-containing Ubl ligase complexes. The complex is also required for degradation of PSIAA6 by regulating the activity of the Ubl ligase SCF-TIR complex. Essential for the structural integrity of the CSN holocomplex. The protein is COP9 signalosome complex subunit 6a of Arabidopsis thaliana (Mouse-ear cress).